We begin with the raw amino-acid sequence, 147 residues long: Transthyretin (147 aa).

Residues 1 to 20 form the signal peptide; that stretch reads MASLRLFLLCLAGLIFASEA. Cys30 carries the post-translational modification Sulfocysteine. Lys35 is an L-thyroxine binding site. Position 62 is a 4-carboxyglutamate (Glu62). Ser72 is modified (phosphoserine). L-thyroxine is bound at residue Glu74. Asn118 carries N-linked (GlcNAc...) asparagine glycosylation. Ser137 lines the L-thyroxine pocket.

This sequence belongs to the transthyretin family. As to quaternary structure, homotetramer. Dimer of dimers. In the homotetramer, subunits assemble around a central channel that can accommodate two ligand molecules. Interacts with RBP4. In terms of processing, sulfonation of the reactive cysteine Cys-30 enhances the stability of the native conformation of TTR, avoiding misassembly of the protein leading to amyloid formation. As to expression, detected in serum and cerebrospinal fluid (at protein level). Highly expressed in the choroid plexus. Detected at lower levels in the liver.

Its subcellular location is the secreted. Thyroid hormone-binding protein. Probably transports thyroxine from the bloodstream to the brain. In Rattus norvegicus (Rat), this protein is Transthyretin (Ttr).